The primary structure comprises 410 residues: Cell division protein FtsZ (410 aa).

Residues 22–26 (GGGGN), 109–111 (GTG), Glu140, Arg144, and Asp188 each bind GTP. Positions 318–410 (ESKKDRKPHR…STPPFFRRKR (93 aa)) are disordered. Residues 330–344 (RQAVQPMQQTTQSVE) show a composition bias toward polar residues. The span at 360–398 (WDIRREQNTRPKVDESSLEQVDKKEFDTFHREEPNHNDD) shows a compositional bias: basic and acidic residues.

It belongs to the FtsZ family. Homodimer. Polymerizes to form a dynamic ring structure in a strictly GTP-dependent manner. Interacts directly with several other division proteins.

The protein resides in the cytoplasm. Functionally, essential cell division protein that forms a contractile ring structure (Z ring) at the future cell division site. The regulation of the ring assembly controls the timing and the location of cell division. One of the functions of the FtsZ ring is to recruit other cell division proteins to the septum to produce a new cell wall between the dividing cells. Binds GTP and shows GTPase activity. This is Cell division protein FtsZ from Enterococcus faecalis (strain ATCC 700802 / V583).